The sequence spans 471 residues: 6-phosphofructo-2-kinase/fructose-2,6-bisphosphatase 1 (471 aa).

Position 2 is an N-acetylserine (serine 2). A 6-phosphofructo-2-kinase region spans residues 2-250; the sequence is SREMGELTQT…AYYLMNIHVT (249 aa). A Phosphoserine; by PKA modification is found at serine 33. 49-57 is a binding site for ATP; that stretch reads GLPARGKTY. Arginine 82 and arginine 105 together coordinate beta-D-fructose 6-phosphate. Residue aspartate 131 is part of the active site. Beta-D-fructose 6-phosphate-binding residues include threonine 133 and arginine 139. Phosphoserine is present on serine 141. Residue cysteine 161 is part of the active site. 170–175 is an ATP binding site; the sequence is NIKQVK. Beta-D-fructose 6-phosphate-binding residues include lysine 175, arginine 196, and tyrosine 200. The interval 251 to 471 is fructose-2,6-bisphosphatase; that stretch reads PRSIYLCRHG…EALDTVPAHY (221 aa). Beta-D-fructose 2,6-bisphosphate is bound at residue arginine 258. Histidine 259 functions as the Tele-phosphohistidine intermediate in the catalytic mechanism. Beta-D-fructose 2,6-bisphosphate is bound by residues asparagine 265, glycine 271, and arginine 308. Glutamate 328 (proton donor/acceptor) is an active-site residue. Tyrosine 339, arginine 353, lysine 357, tyrosine 368, glutamine 394, and arginine 398 together coordinate beta-D-fructose 2,6-bisphosphate. An ATP-binding site is contributed by 350–353; sequence FALR. Residues 394–398 and tyrosine 430 contribute to the ATP site; that span reads QAVMR.

The protein in the C-terminal section; belongs to the phosphoglycerate mutase family. Homodimer. As to expression, liver.

It catalyses the reaction beta-D-fructose 2,6-bisphosphate + H2O = beta-D-fructose 6-phosphate + phosphate. It carries out the reaction beta-D-fructose 6-phosphate + ATP = beta-D-fructose 2,6-bisphosphate + ADP + H(+). Its activity is regulated as follows. Phosphorylation at Ser-33 inhibits the kinase and activates the bisphosphatase. In terms of biological role, synthesis and degradation of fructose 2,6-bisphosphate. The protein is 6-phosphofructo-2-kinase/fructose-2,6-bisphosphatase 1 of Mus musculus (Mouse).